Consider the following 359-residue polypeptide: Fe-S cluster assembly protein DRE2 (359 aa).

Residues 1 to 148 (MASTGRVLLL…KPDVAAQQAV (148 aa)) are N-terminal SAM-like domain. Disordered stretches follow at residues 97–116 (NKAW…NDND) and 149–210 (PLKL…PSGV). Residues 149-246 (PLKLGRRKKE…EDELLGEDDM (98 aa)) are linker. The segment covering 152-164 (LGRRKKEKERRHP) has biased composition (basic residues). Over residues 167 to 183 (NDVTNGKVNAPSSNGVN) the composition is skewed to polar residues. Residues 184 to 200 (ASTSTATATATTTTTTT) are compositionally biased toward low complexity. Residues Cys-256, Cys-267, Cys-270, and Cys-272 each coordinate [2Fe-2S] cluster. The segment at 256–272 (CRPKPGKRRRACKDCSC) is fe-S binding site A. Residues Cys-322, Cys-325, Cys-333, and Cys-336 each coordinate [4Fe-4S] cluster. 2 consecutive short sequence motifs (cx2C motif) follow at residues 322-325 (CGNC) and 333-336 (CDGC). The tract at residues 322–336 (CGNCSLGDAFRCDGC) is fe-S binding site B.

It belongs to the anamorsin family. Monomer. Interacts with TAH18. Interacts with MIA40. [2Fe-2S] cluster serves as cofactor. It depends on [4Fe-4S] cluster as a cofactor.

It localises to the cytoplasm. The protein resides in the mitochondrion intermembrane space. Functionally, component of the cytosolic iron-sulfur (Fe-S) protein assembly (CIA) machinery required for the maturation of extramitochondrial Fe-S proteins. Part of an electron transfer chain functioning in an early step of cytosolic Fe-S biogenesis, facilitating the de novo assembly of a [4Fe-4S] cluster on the scaffold complex CFD1-NBP35. Electrons are transferred to DRE2 from NADPH via the FAD- and FMN-containing protein TAH18. TAH18-DRE2 are also required for the assembly of the diferric tyrosyl radical cofactor of ribonucleotide reductase (RNR), probably by providing electrons for reduction during radical cofactor maturation in the catalytic small subunit RNR2. In Blastomyces gilchristii (strain SLH14081) (Blastomyces dermatitidis), this protein is Fe-S cluster assembly protein DRE2.